The sequence spans 399 residues: UDP-N-acetylglucosamine--N-acetylmuramyl-(pentapeptide) pyrophosphoryl-undecaprenol N-acetylglucosamine transferase (399 aa).

The interval 1 to 31 is disordered; that stretch reads MTSRFGHSQHPRRGRSARARAGRREGVQSNF. Basic residues predominate over residues 7-21; that stretch reads HSQHPRRGRSARARA. UDP-N-acetyl-alpha-D-glucosamine contacts are provided by residues 58-60, Asn-170, Arg-206, Ser-234, Ile-288, and Gln-333; that span reads TGG.

The protein belongs to the glycosyltransferase 28 family. MurG subfamily.

The protein localises to the cell inner membrane. It carries out the reaction di-trans,octa-cis-undecaprenyl diphospho-N-acetyl-alpha-D-muramoyl-L-alanyl-D-glutamyl-meso-2,6-diaminopimeloyl-D-alanyl-D-alanine + UDP-N-acetyl-alpha-D-glucosamine = di-trans,octa-cis-undecaprenyl diphospho-[N-acetyl-alpha-D-glucosaminyl-(1-&gt;4)]-N-acetyl-alpha-D-muramoyl-L-alanyl-D-glutamyl-meso-2,6-diaminopimeloyl-D-alanyl-D-alanine + UDP + H(+). It participates in cell wall biogenesis; peptidoglycan biosynthesis. In terms of biological role, cell wall formation. Catalyzes the transfer of a GlcNAc subunit on undecaprenyl-pyrophosphoryl-MurNAc-pentapeptide (lipid intermediate I) to form undecaprenyl-pyrophosphoryl-MurNAc-(pentapeptide)GlcNAc (lipid intermediate II). This chain is UDP-N-acetylglucosamine--N-acetylmuramyl-(pentapeptide) pyrophosphoryl-undecaprenol N-acetylglucosamine transferase, found in Acidovorax sp. (strain JS42).